Reading from the N-terminus, the 31-residue chain is Cytochrome b6-f complex subunit 6 (31 aa).

The helical transmembrane segment at 4–24 (ITSYFGFLLAALTITSVLFIG) threads the bilayer.

The protein belongs to the PetL family. In terms of assembly, the 4 large subunits of the cytochrome b6-f complex are cytochrome b6, subunit IV (17 kDa polypeptide, PetD), cytochrome f and the Rieske protein, while the 4 small subunits are PetG, PetL, PetM and PetN. The complex functions as a dimer.

It localises to the plastid. The protein localises to the chloroplast thylakoid membrane. Functionally, component of the cytochrome b6-f complex, which mediates electron transfer between photosystem II (PSII) and photosystem I (PSI), cyclic electron flow around PSI, and state transitions. PetL is important for photoautotrophic growth as well as for electron transfer efficiency and stability of the cytochrome b6-f complex. This Nandina domestica (Heavenly bamboo) protein is Cytochrome b6-f complex subunit 6.